The following is a 186-amino-acid chain: FMN-dependent NADH:quinone oxidoreductase 1 (186 aa).

FMN contacts are provided by residues 15–17 and 81–84; these read SVS and MYNF.

Belongs to the azoreductase type 1 family. As to quaternary structure, homodimer. FMN serves as cofactor.

The catalysed reaction is 2 a quinone + NADH + H(+) = 2 a 1,4-benzosemiquinone + NAD(+). The enzyme catalyses N,N-dimethyl-1,4-phenylenediamine + anthranilate + 2 NAD(+) = 2-(4-dimethylaminophenyl)diazenylbenzoate + 2 NADH + 2 H(+). In terms of biological role, quinone reductase that provides resistance to thiol-specific stress caused by electrophilic quinones. Functionally, also exhibits azoreductase activity. Catalyzes the reductive cleavage of the azo bond in aromatic azo compounds to the corresponding amines. The chain is FMN-dependent NADH:quinone oxidoreductase 1 from Idiomarina loihiensis (strain ATCC BAA-735 / DSM 15497 / L2-TR).